The chain runs to 112 residues: Nucleoid-associated protein FTM_1023 (112 aa).

Belongs to the YbaB/EbfC family. Homodimer.

The protein localises to the cytoplasm. It localises to the nucleoid. Binds to DNA and alters its conformation. May be involved in regulation of gene expression, nucleoid organization and DNA protection. This Francisella tularensis subsp. mediasiatica (strain FSC147) protein is Nucleoid-associated protein FTM_1023.